Here is a 306-residue protein sequence, read N- to C-terminus: MTKAGSKGGNLRDKLDGNELDLSLSDLNEVPVKELAALPKATVLDLSCNKLTTLPSDFCGLTHLVKLDLSKNKLRQLPADFGRLVNLQHLDLLNNRLVTLPVSFAQLKSLKWLDLKDNPLDPVLAKVAGDCLDEKQCKQCANKVLQHMKAVQADQERERQRRLEIDREAEKKWEAKQRAKEAQERELRKREKAEEKERRRKEYDALKAAKREQEKKPKKETNQAPKSKSSSRPRKPPPRKHTRSWAVLKLLLLLLLCVAGGLVACRVTELQQQPLCTSVNTIYDNAVRGLRSHDILQWVLQTDSQQ.

Met1 carries the N-acetylmethionine modification. Thr2 bears the N-acetylthreonine; in Leucine-rich repeat-containing protein 59, N-terminally processed mark. Residues 2–244 (TKAGSKGGNL…KPPPRKHTRS (243 aa)) lie on the Cytoplasmic side of the membrane. LRR repeat units follow at residues 10–31 (NLRD…NEVP), 40–62 (KATV…CGLT), 63–84 (HLVK…FGRL), 86–107 (NLQH…FAQL), and 109–128 (SLKW…AKVA). Phosphoserine occurs at positions 23 and 25. Lys73 is modified (N6-succinyllysine). N6-acetyllysine is present on Lys135. Positions 152–216 (QADQERERQR…KAAKREQEKK (65 aa)) form a coiled coil. Basic and acidic residues predominate over residues 175–221 (AKQRAKEAQERELRKREKAEEKERRRKEYDALKAAKREQEKKPKKET). The disordered stretch occupies residues 175-241 (AKQRAKEAQE…RPRKPPPRKH (67 aa)). Residues 229–241 (SSSRPRKPPPRKH) are compositionally biased toward basic residues. A helical transmembrane segment spans residues 245–265 (WAVLKLLLLLLLCVAGGLVAC). The Lumenal portion of the chain corresponds to 266–306 (RVTELQQQPLCTSVNTIYDNAVRGLRSHDILQWVLQTDSQQ).

As to quaternary structure, can form homodimers. Interacts with SGO1. Interacts with FGF1.

It localises to the microsome membrane. The protein localises to the endoplasmic reticulum membrane. The protein resides in the nucleus envelope. Its function is as follows. Required for nuclear import of FGF1, but not that of FGF2. Might regulate nuclear import of exogenous FGF1 by facilitating interaction with the nuclear import machinery and by transporting cytosolic FGF1 to, and possibly through, the nuclear pores. This is Leucine-rich repeat-containing protein 59 (LRRC59) from Bos taurus (Bovine).